The chain runs to 347 residues: Phosphoribosylformylglycinamidine cyclo-ligase (347 aa).

It belongs to the AIR synthase family.

Its subcellular location is the cytoplasm. It carries out the reaction 2-formamido-N(1)-(5-O-phospho-beta-D-ribosyl)acetamidine + ATP = 5-amino-1-(5-phospho-beta-D-ribosyl)imidazole + ADP + phosphate + H(+). It functions in the pathway purine metabolism; IMP biosynthesis via de novo pathway; 5-amino-1-(5-phospho-D-ribosyl)imidazole from N(2)-formyl-N(1)-(5-phospho-D-ribosyl)glycinamide: step 2/2. The sequence is that of Phosphoribosylformylglycinamidine cyclo-ligase from Alkaliphilus metalliredigens (strain QYMF).